The chain runs to 735 residues: 1,4-alpha-glucan branching enzyme GlgB (735 aa).

D418 functions as the Nucleophile in the catalytic mechanism. E471 functions as the Proton donor in the catalytic mechanism.

It belongs to the glycosyl hydrolase 13 family. GlgB subfamily. Monomer.

The catalysed reaction is Transfers a segment of a (1-&gt;4)-alpha-D-glucan chain to a primary hydroxy group in a similar glucan chain.. It participates in glycan biosynthesis; glycogen biosynthesis. Its function is as follows. Catalyzes the formation of the alpha-1,6-glucosidic linkages in glycogen by scission of a 1,4-alpha-linked oligosaccharide from growing alpha-1,4-glucan chains and the subsequent attachment of the oligosaccharide to the alpha-1,6 position. The sequence is that of 1,4-alpha-glucan branching enzyme GlgB from Agrobacterium fabrum (strain C58 / ATCC 33970) (Agrobacterium tumefaciens (strain C58)).